Consider the following 141-residue polypeptide: Lutropin subunit beta (141 aa).

An N-terminal signal peptide occupies residues 1 to 20; the sequence is MERLQGLLLWLLLSPSVVWA. Intrachain disulfides connect Cys-29–Cys-77, Cys-43–Cys-92, Cys-46–Cys-130, Cys-54–Cys-108, Cys-58–Cys-110, and Cys-113–Cys-120. N-linked (GlcNAc...) asparagine glycosylation is present at Asn-33.

The protein belongs to the glycoprotein hormones subunit beta family. Heterodimer of a common alpha chain and a unique beta chain which confers biological specificity to thyrotropin, lutropin, follitropin and gonadotropin.

Its subcellular location is the secreted. Its function is as follows. Promotes spermatogenesis and ovulation by stimulating the testes and ovaries to synthesize steroids. This is Lutropin subunit beta (Lhb) from Rattus norvegicus (Rat).